We begin with the raw amino-acid sequence, 99 residues long: Protein Frey (99 aa).

The helical transmembrane segment at 7 to 29 threads the bilayer; sequence GALYPRAGLSLFLLYLVLAAVLL. Residues 65 to 88 are disordered; that stretch reads PKHPWPRGPRPLLSRAQQRKRDGP.

Interacts with SPPL2C (via active sites); the interaction stabilizes FREY1 protein and inhibits SPPL2C proteolytic activity. Interacts with IZUMO1; the interaction retains IZUMO1 at the endoplasmic reticulum membrane and coordinates IZUMO1 complex assembly.

Its subcellular location is the endoplasmic reticulum membrane. Key regulator for male fertility expressed transiently in round spermatids where it recruits IZUMO1 at the endoplasmic reticulum (ER) membrane and coordinates the oolemmal binding multimeric complex (IZUMO1 complex) assembly. Upon complete assembly of the IZUMO1 complex, its ER retention is released, facilitating IZUMO1 complex export to the acrosome. Through the interaction with SPPL2C, inhibits its intramembrane protease activity directly accessing the catalytic center of an I-CLiP. The polypeptide is Protein Frey (Ailuropoda melanoleuca (Giant panda)).